Reading from the N-terminus, the 981-residue chain is Lateral signaling target protein 2 homolog (981 aa).

The disordered stretch occupies residues 308 to 462; that stretch reads PLGSSSIEAP…LESSDDDTDE (155 aa). 4 stretches are compositionally biased toward low complexity: residues 326-356, 369-380, 390-404, and 412-433; these read TTSS…TTNT, NNHNSNSNSSTN, SPSM…TPTA, and PSHS…PADW. Positions 434-462 are enriched in acidic residues; the sequence is SDGDDEDEDDDDIEVDEEDLESSDDDTDE. A phosphoserine mark is found at serine 544 and serine 545. 2 disordered regions span residues 561-642 and 749-897; these read EQMQ…SSLS and DNVF…SPPA. A compositionally biased stretch (basic residues) spans 576–611; it reads HSHRHHQRHHHHHHHRHSHQHRQPHPHRTTRSGRKR. Positions 630 to 642 are enriched in low complexity; the sequence is LASGDTSAASSLS. A compositionally biased stretch (polar residues) spans 760 to 791; the sequence is ATGQRHSAGASMQRNNTIDLASQSGEGSPSGA. Serine 805 bears the Phosphoserine mark. 2 stretches are compositionally biased toward low complexity: residues 811–866 and 883–896; these read AASS…PVSA and PSSA…LSPP. Residues 901-961 form an FYVE-type zinc finger; it reads DGKAPRCMAC…VCRDCYVREV (61 aa). Zn(2+) contacts are provided by cysteine 907, cysteine 910, cysteine 923, cysteine 926, cysteine 931, cysteine 934, cysteine 953, and cysteine 956.

It belongs to the lst-2 family.

In terms of biological role, negative regulator of epidermal growth factor receptor (EGFR) signaling. The polypeptide is Lateral signaling target protein 2 homolog (Drosophila erecta (Fruit fly)).